Reading from the N-terminus, the 348-residue chain is L-threonine 3-dehydrogenase (348 aa).

A Zn(2+)-binding site is contributed by Cys-42. Residues Thr-44 and His-47 each act as charge relay system in the active site. Zn(2+) contacts are provided by His-67, Glu-68, Cys-97, Cys-100, Cys-103, and Cys-111. Residues Leu-179, Glu-199, Arg-204, Leu-266–Leu-268, and Ile-291–Thr-292 each bind NAD(+).

The protein belongs to the zinc-containing alcohol dehydrogenase family. As to quaternary structure, homotetramer. It depends on Zn(2+) as a cofactor.

The protein localises to the cytoplasm. It carries out the reaction L-threonine + NAD(+) = (2S)-2-amino-3-oxobutanoate + NADH + H(+). It functions in the pathway amino-acid degradation; L-threonine degradation via oxydo-reductase pathway; glycine from L-threonine: step 1/2. Catalyzes the NAD(+)-dependent oxidation of L-threonine to 2-amino-3-ketobutyrate. The polypeptide is L-threonine 3-dehydrogenase (Pyrococcus abyssi (strain GE5 / Orsay)).